We begin with the raw amino-acid sequence, 403 residues long: Tryptophan synthase beta chain (403 aa).

K88 is modified (N6-(pyridoxal phosphate)lysine).

This sequence belongs to the TrpB family. As to quaternary structure, tetramer of two alpha and two beta chains. The cofactor is pyridoxal 5'-phosphate.

The enzyme catalyses (1S,2R)-1-C-(indol-3-yl)glycerol 3-phosphate + L-serine = D-glyceraldehyde 3-phosphate + L-tryptophan + H2O. It participates in amino-acid biosynthesis; L-tryptophan biosynthesis; L-tryptophan from chorismate: step 5/5. The beta subunit is responsible for the synthesis of L-tryptophan from indole and L-serine. The polypeptide is Tryptophan synthase beta chain (Shewanella frigidimarina (strain NCIMB 400)).